A 501-amino-acid polypeptide reads, in one-letter code: MLTPRVLRALGWTGLFFLLLSPSNVLGASLSRDLETPPFLSFDPSNISINGAPLTEVPHAPSTESVSTNSESTNEHTITETTGKNAYIHNNASTDKQNANDTHKTPNILCDTEEVFVFLNETGRFVCTLKVDPPSDSEWSNFVLDLIFNPIEYHANEKNVEAARIAGLYGVPGSDYAYPRQSELISSIRRDPQGTFWTSPSPHGNKYFIWINKTTNTMGVEIRNVDYADNGYMQVIMRDHFNRPLIDKHIYIRVCQRPASVDVLAPPVLSGENYKASCIVRHFYPPGSVYVSWRQNGNIATPRKDRDGSFWWFESGRGATLVSTITLGNSGIDFPPKISCLVAWKQGDMISTTNATAIPTVYHHPRLSLAFKDGYAICTIECVPSEITVRWLVHDEAQPNTTYNTVVTGLCRTIDRHRNLLSRIPVWDNWTKTKYTCRLIGYPFDEDKFQDSEYYDATPAARGTPMVITVTAVLGLAVILGMGIIMTALCLYNSTRKNIRL.

The signal sequence occupies residues 1–27; it reads MLTPRVLRALGWTGLFFLLLSPSNVLG. Residues 28–465 lie on the Virion surface side of the membrane; the sequence is ASLSRDLETP…DATPAARGTP (438 aa). The N-linked (GlcNAc...) asparagine; by host glycan is linked to N46. The tract at residues 53 to 86 is disordered; sequence PLTEVPHAPSTESVSTNSESTNEHTITETTGKNA. The segment covering 62-72 has biased composition (low complexity); sequence STESVSTNSES. N-linked (GlcNAc...) asparagine; by host glycans are attached at residues N91, N100, N120, N212, N354, N400, and N429. The 99-residue stretch at 258-356 folds into the Ig-like domain; it reads PASVDVLAPP…GDMISTTNAT (99 aa). A helical membrane pass occupies residues 466 to 492; it reads MVITVTAVLGLAVILGMGIIMTALCLY. Topologically, residues 493 to 501 are cytoplasmic; it reads NSTRKNIRL.

This sequence belongs to the herpesviridae glycoprotein C family.

The protein resides in the secreted. It localises to the host cell membrane. In terms of biological role, may play an immunoevasive role in the pathogenesis of Marek's disease. It is a candidate for causing the early-stage immunosuppression that occurs after MDHV infection. This chain is Envelope glycoprotein C homolog (gC), found in Gallus gallus (Chicken).